The following is a 343-amino-acid chain: Protein RecA (343 aa).

ATP is bound at residue 64 to 71 (GPESSGKT).

The protein belongs to the RecA family.

The protein resides in the cytoplasm. Its function is as follows. Can catalyze the hydrolysis of ATP in the presence of single-stranded DNA, the ATP-dependent uptake of single-stranded DNA by duplex DNA, and the ATP-dependent hybridization of homologous single-stranded DNAs. It interacts with LexA causing its activation and leading to its autocatalytic cleavage. The protein is Protein RecA of Bacillus mycoides (strain KBAB4) (Bacillus weihenstephanensis).